The following is an 80-amino-acid chain: Small ribosomal subunit protein bS16 (80 aa).

The protein belongs to the bacterial ribosomal protein bS16 family.

This is Small ribosomal subunit protein bS16 from Hydrogenovibrio crunogenus (strain DSM 25203 / XCL-2) (Thiomicrospira crunogena).